The chain runs to 538 residues: MVAYRFLTLISLGLGSHCASALQYGYNQVSTHKDSAVVAGAFPAINGTHLQSPAFTSPGTVPRGFSDGTSGPTRDETMEGFMRRLARSNSWMTYHKANFKSEEGRKFPYMYLSASKSSIEKPSSHKLRVWLQGGVHGNEPAGDQSMLALLGDLAANQKWAAKLLEKMDILVLPRYNPDGVFYFQRYLATNFDPNRDHIKLARQQTRDIKELFARFSPHIATDMHEFTAGRAFGPKKDIIYAADALFSSAKNLNIDEGIRQLSEKLFAKRMGKDIEAAGLRWDPYITQGESSSSKLLLREAGTDAKIGRNAMGLSQCVVFLCETRGIGIADQHFERRTLSGLVMVKSILQTAVDNFDEVYNTIERGIRRFTNSRNDIVLTDRSPIMERTFGMLNTTDATLFDYPIDFATTTPAQAVLTRSRPRAYLIPPSWPDIVKRLEVFGVKADKLPYSYVGPVEALNVTSVTFDKEYYEGVVTTTVETKLVERNIRLPAGSYLVKTNQKNAALAFVALEPENIDSFASFGVIPVSTGDQYPIFRLK.

A signal peptide spans methionine 1 to alanine 21. N-linked (GlcNAc...) asparagine glycosylation occurs at asparagine 46. The tract at residues proline 53–glutamate 76 is disordered. A Peptidase M14 domain is found at glycine 71–alanine 351. Zn(2+)-binding residues include histidine 136, glutamate 139, and histidine 224. Glutamate 322 functions as the Proton donor/acceptor in the catalytic mechanism. Asparagine 393 and asparagine 459 each carry an N-linked (GlcNAc...) asparagine glycan.

It belongs to the peptidase M14 family. Requires Zn(2+) as cofactor.

The protein localises to the secreted. Functionally, extracellular metalloprotease that contributes to pathogenicity. The protein is Carboxypeptidase 2 (MCPB) of Trichophyton equinum (Horse ringworm fungus).